A 262-amino-acid chain; its full sequence is Phosphatidylglycerol--prolipoprotein diacylglyceryl transferase (262 aa).

The next 3 membrane-spanning stretches (helical) occupy residues 17-37 (LKVHWYGLMYVIGIAATWILA), 57-77 (LVFYAAIGVVVGGRLGYALFY), and 92-112 (IWEGGMAFHGGLIGVLIAMYA). Arginine 140 lines the a 1,2-diacyl-sn-glycero-3-phospho-(1'-sn-glycerol) pocket. The next 2 helical transmembrane spans lie at 200–220 (MAVSGLFLLGYGVFRFAVEFV) and 234–254 (WLTMGQILCLPMILFGIVLLA).

This sequence belongs to the Lgt family.

Its subcellular location is the cell inner membrane. The catalysed reaction is L-cysteinyl-[prolipoprotein] + a 1,2-diacyl-sn-glycero-3-phospho-(1'-sn-glycerol) = an S-1,2-diacyl-sn-glyceryl-L-cysteinyl-[prolipoprotein] + sn-glycerol 1-phosphate + H(+). It participates in protein modification; lipoprotein biosynthesis (diacylglyceryl transfer). Its function is as follows. Catalyzes the transfer of the diacylglyceryl group from phosphatidylglycerol to the sulfhydryl group of the N-terminal cysteine of a prolipoprotein, the first step in the formation of mature lipoproteins. The sequence is that of Phosphatidylglycerol--prolipoprotein diacylglyceryl transferase from Methylococcus capsulatus (strain ATCC 33009 / NCIMB 11132 / Bath).